A 140-amino-acid polypeptide reads, in one-letter code: MAAITFHLDVVSAEKKIFSGRVETFQVTGSEGELGIFHGHTPLLTAIKPGMVRIVKLHGEEEFIYVSGGIVEVQPGTATVLADTAIRGEELDAAKAEEAKRRAKENILNQHGDMDFAQAASELAKAIAQLRVIELTKKRR.

The protein belongs to the ATPase epsilon chain family. As to quaternary structure, F-type ATPases have 2 components, CF(1) - the catalytic core - and CF(0) - the membrane proton channel. CF(1) has five subunits: alpha(3), beta(3), gamma(1), delta(1), epsilon(1). CF(0) has three main subunits: a, b and c.

The protein resides in the cell inner membrane. Its function is as follows. Produces ATP from ADP in the presence of a proton gradient across the membrane. The polypeptide is ATP synthase epsilon chain (Vibrio vulnificus (strain CMCP6)).